A 297-amino-acid chain; its full sequence is Transmembrane protein 178A (297 aa).

The signal sequence occupies residues 1 to 25; sequence MEPRALVTALSLGLSLCSLGLLVTA. Over 26–179 the chain is Extracellular; it reads IFTDHWYETD…LLHLRRITAG (154 aa). A compositionally biased stretch (basic and acidic residues) spans 41 to 57; the sequence is ESCERSRAGADPPDQKN. Positions 41 to 86 are disordered; it reads ESCERSRAGADPPDQKNRLMPLSHLPLRDSPPLGRRLLPGGPGRSD. Low complexity predominate over residues 68 to 79; it reads RDSPPLGRRLLP. An N-linked (GlcNAc...) asparagine glycan is attached at Asn158. Residues 180–200 form a helical membrane-spanning segment; it reads FLGMAVAVLLCGCIVATVSFF. The Cytoplasmic segment spans residues 201-208; it reads WEESLTQH. A helical membrane pass occupies residues 209 to 229; it reads VAGLLFLMTGIFCTISLCTYA. Residues 230 to 257 lie on the Extracellular side of the membrane; it reads ASVSYDLNRVPKLIYSLPHDVEHGYSWS. A helical transmembrane segment spans residues 258 to 278; that stretch reads IFCAWCSLGFIVAAGGLCIAY. The Cytoplasmic segment spans residues 279–297; sequence PFISRTKIAHLKSGRDSTV.

It belongs to the TMEM178 family. Interacts with STIM1.

It is found in the endoplasmic reticulum membrane. In terms of biological role, acts as a negative regulator of osteoclast differentiation in basal and inflammatory conditions by regulating TNFSF11-induced Ca (2+) fluxes, thereby controlling the induction of NFATC1. This Rattus norvegicus (Rat) protein is Transmembrane protein 178A (Tmem178a).